Here is a 107-residue protein sequence, read N- to C-terminus: Thioredoxin-1 (107 aa).

One can recognise a Thioredoxin domain in the interval 2–106; it reads ASVRTMNDYH…LTNMMAKLVK (105 aa). Active-site nucleophile residues include Cys31 and Cys34. A disulfide bridge connects residues Cys31 and Cys34.

It belongs to the thioredoxin family. Ovary specific. Expressed present in the nurse cells from stage 9 of ovary development and is transported into the oocyte. Expressed throughout oogenesis.

The protein localises to the nucleus. In terms of biological role, participates in various redox reactions through the reversible oxidation of its active center dithiol to a disulfide and catalyzes dithiol-disulfide exchange reactions. As a reducing substrate of peroxiredoxin 1, thioredoxin 2 is preferred over thioredoxin 1. Required for female meiosis and early embryonic development. The sequence is that of Thioredoxin-1 (dhd) from Drosophila melanogaster (Fruit fly).